Consider the following 255-residue polypeptide: Cytochrome b561 and DOMON domain-containing protein At5g48750 (255 aa).

The N-terminal stretch at 1 to 27 is a signal peptide; that stretch reads MFLSSRTIFVGLCFLFVLAPCFTRATT. In terms of domain architecture, DOMON spans 54–169; the sequence is LDSFLHYSYV…TVVNHLWQDG (116 aa). The region spanning 176–255 is the Cytochrome b561 domain; that stretch reads RLGMHAMSGN…DPTWFYILIL (80 aa). A helical transmembrane segment spans residues 216-236; it reads IHGLVNAVCWGIFIPIGVMAA.

It localises to the membrane. This Arabidopsis thaliana (Mouse-ear cress) protein is Cytochrome b561 and DOMON domain-containing protein At5g48750.